The chain runs to 301 residues: Ankyrin repeat domain-containing protein 29 (301 aa).

ANK repeat units follow at residues 11 to 41 (PLAN…DVDC), 45 to 74 (HGTT…DINL), 78 to 107 (SGTT…STEF), 111 to 140 (DGGT…NIHD), 144 to 173 (DGAT…KVNQ), 177 to 206 (DGTA…DRDA), 210 to 239 (DGTT…TLGI), and 242 to 271 (NGTS…DPSL).

The protein is Ankyrin repeat domain-containing protein 29 (ANKRD29) of Homo sapiens (Human).